Here is a 131-residue protein sequence, read N- to C-terminus: Small ribosomal subunit protein uS8 (131 aa).

The protein belongs to the universal ribosomal protein uS8 family. In terms of assembly, part of the 30S ribosomal subunit. Contacts proteins S5 and S12.

Functionally, one of the primary rRNA binding proteins, it binds directly to 16S rRNA central domain where it helps coordinate assembly of the platform of the 30S subunit. In Sulfurimonas denitrificans (strain ATCC 33889 / DSM 1251) (Thiomicrospira denitrificans (strain ATCC 33889 / DSM 1251)), this protein is Small ribosomal subunit protein uS8.